We begin with the raw amino-acid sequence, 449 residues long: Required for meiotic nuclear division protein 1 homolog (449 aa).

Residues 1-16 constitute a mitochondrion transit peptide; that stretch reads MPATLLRAVAGSHRVL.

The protein belongs to the RMD1/sif2 family. As to quaternary structure, homooligomer.

It localises to the mitochondrion. Functionally, required for mitochondrial translation, possibly by coordinating the assembly or maintenance of the mitochondrial ribosome. The polypeptide is Required for meiotic nuclear division protein 1 homolog (RMND1) (Pongo abelii (Sumatran orangutan)).